The following is a 123-amino-acid chain: Small ribosomal subunit protein uS12 (123 aa).

Residues 1-29 form a disordered region; sequence MPTINQLVRKGREPQKAKSKVPAMEQNPQ. Aspartate 89 bears the 3-methylthioaspartic acid mark.

The protein belongs to the universal ribosomal protein uS12 family. Part of the 30S ribosomal subunit. Contacts proteins S8 and S17. May interact with IF1 in the 30S initiation complex.

In terms of biological role, with S4 and S5 plays an important role in translational accuracy. Interacts with and stabilizes bases of the 16S rRNA that are involved in tRNA selection in the A site and with the mRNA backbone. Located at the interface of the 30S and 50S subunits, it traverses the body of the 30S subunit contacting proteins on the other side and probably holding the rRNA structure together. The combined cluster of proteins S8, S12 and S17 appears to hold together the shoulder and platform of the 30S subunit. The polypeptide is Small ribosomal subunit protein uS12 (Novosphingobium aromaticivorans (strain ATCC 700278 / DSM 12444 / CCUG 56034 / CIP 105152 / NBRC 16084 / F199)).